Reading from the N-terminus, the 420-residue chain is MDKFRVQGRTRLSGEVTISGAKNAALPILFAALLAEEPVELQNVPKLKDIDTTIKLLSQLGTKIERNNGSVFVDASAVNEFCAPYDLVKTMRASIWALGPLVARFGQGQVSLPGGCAIGARPVDLHITGLEQLGAEIKLEEGYVKASVNGRLKGAHIVMDKVSVGATVTIMSAATLAEGTTVIENAAREPEIVDTANFLNTLGAKISGAGTDRITIEGVTRLGGGVYRVLPDRIETGTFLVAAAISGGKVVCRQTRPDTLDAVLAKLREAGADIEVGDDWISLDMQGKRPKAITFRTAPHPGFPTDMQAQFSLLNLVAEGTGVITETIFENRFMHVPELIRMGAHAEIESNTVICYGVEQLSGAQVMATDLRASASLVLAGCIAEGVTIVDRIYHIDRGYERIEDKLRALGAKIERVKGE.

22–23 (KN) is a binding site for phosphoenolpyruvate. Residue Arg92 coordinates UDP-N-acetyl-alpha-D-glucosamine. Cys116 functions as the Proton donor in the catalytic mechanism. Cys116 carries the post-translational modification 2-(S-cysteinyl)pyruvic acid O-phosphothioketal. Residues 121-125 (RPVDL), 161-164 (KVSV), Asp306, and Ile328 each bind UDP-N-acetyl-alpha-D-glucosamine.

Belongs to the EPSP synthase family. MurA subfamily.

Its subcellular location is the cytoplasm. The catalysed reaction is phosphoenolpyruvate + UDP-N-acetyl-alpha-D-glucosamine = UDP-N-acetyl-3-O-(1-carboxyvinyl)-alpha-D-glucosamine + phosphate. It participates in cell wall biogenesis; peptidoglycan biosynthesis. In terms of biological role, cell wall formation. Adds enolpyruvyl to UDP-N-acetylglucosamine. The protein is UDP-N-acetylglucosamine 1-carboxyvinyltransferase of Yersinia pseudotuberculosis serotype O:1b (strain IP 31758).